Reading from the N-terminus, the 919-residue chain is Translation initiation factor IF-2 (919 aa).

The span at 93-107 shows a compositional bias: basic and acidic residues; it reads MGKALPEEVPEKIAP. Disordered stretches follow at residues 93–145 and 158–279; these read MGKA…PAEP and KIQP…RKGE. The span at 136-145 shows a compositional bias: pro residues; sequence LAPPEKPAEP. A compositionally biased stretch (basic and acidic residues) spans 158 to 171; that stretch reads KIQPPEKFAEEPLK. Over residues 172-193 the composition is skewed to low complexity; the sequence is KPAVIEPEKAAAAPKAVPGEAK. Basic and acidic residues-rich tracts occupy residues 194 to 203 and 256 to 279; these read PLPRTERVQE and GAPKTEAEKPRKKIKLPDETRKGE. The 170-residue stretch at 420 to 589 folds into the tr-type G domain; that stretch reads PRAPVVTIMG…LLQADVLELK (170 aa). The segment at 429–436 is G1; that stretch reads GHVDHGKT. Position 429 to 436 (429 to 436) interacts with GTP; sequence GHVDHGKT. Residues 454 to 458 form a G2 region; the sequence is GITQA. Residues 475-478 form a G3 region; the sequence is DTPG. GTP is bound by residues 475 to 479 and 529 to 532; these read DTPGH and NKID. The segment at 529–532 is G4; sequence NKID. Residues 565 to 567 form a G5 region; that stretch reads SAK.

The protein belongs to the TRAFAC class translation factor GTPase superfamily. Classic translation factor GTPase family. IF-2 subfamily.

It localises to the cytoplasm. Its function is as follows. One of the essential components for the initiation of protein synthesis. Protects formylmethionyl-tRNA from spontaneous hydrolysis and promotes its binding to the 30S ribosomal subunits. Also involved in the hydrolysis of GTP during the formation of the 70S ribosomal complex. This is Translation initiation factor IF-2 from Syntrophus aciditrophicus (strain SB).